Consider the following 204-residue polypeptide: High frequency lysogenization protein HflD homolog (204 aa).

The protein belongs to the HflD family.

It localises to the cytoplasm. It is found in the cell inner membrane. In Stenotrophomonas maltophilia (strain R551-3), this protein is High frequency lysogenization protein HflD homolog.